Reading from the N-terminus, the 87-residue chain is MVSQLFEEKAKAVNELPTKPSTDELLELYALYKQATVGDNDKEKPGIFNMKDRYKWEAWENLKGKSQEDAEKEYIALVDQLIAKYSS.

Residues 2–87 enclose the ACB domain; it reads VSQLFEEKAK…VDQLIAKYSS (86 aa). An acyl-CoA is bound by residues 29–33, K51, and K55; that span reads YALYK. A Glycyl lysine isopeptide (Lys-Gly) (interchain with G-Cter in ubiquitin) cross-link involves residue K51. K72 participates in a covalent cross-link: Glycyl lysine isopeptide (Lys-Gly) (interchain with G-Cter in ubiquitin). Y74 lines the an acyl-CoA pocket.

It belongs to the ACBP family.

In terms of biological role, binds medium- and long-chain acyl-CoA esters with very high affinity and may function as an intracellular carrier of acyl-CoA esters. Enhances the in vitro activity of the ceramide synthase complex. The sequence is that of Acyl-CoA-binding protein (ACB1) from Saccharomyces cerevisiae (strain ATCC 204508 / S288c) (Baker's yeast).